The sequence spans 543 residues: MMTPTELITHYRIVQHSFAPLRLSWWETNRVIAVQIWRDSSFFTRILIAFIGLCLLSIFSRLTRPRSLRRLGIPGAVQPRFSTWSLDFKKVLEDSAKKYPNSPFCLNAFGTEYAVLPSKCYDEVKRLPEHQASAFAFFREAFHGAWTGAGVQTPELGRTIAVELTRGIPSLVHWRQMDCAEAFKMCIGEPSEWREIQLFEAIQRIVISVNSSSFVGRELGTNQNWLRLIYNMPLQLGIPTVILGWTPFLLQPLLKPFLFAPLRMTQRKIKSMLRPVLENDVQEYEASSDKKNLLSPKEQGKVQLTGWLLSRYKGKLDFEVLLQDFITVLFESTPSTASTLFHVVCELAADPALQDMLRQELEEHTDNGSLPQTHLNELRKMDSVMRESARASPFSYLVLYRKLSIPTKLSMGPELPAGTNICVDAHHINTSPDLWDQPHTFDGLRHYRARQQPQNENRYKFANLGSDAPSWGDGLQACPGRMFADNTIKIILTHLLLNYDVKLRPGESKPEKGAMPNGSIVPDVWAKVLFRSRASSAVNEGKK.

The helical transmembrane segment at 40-60 (SSFFTRILIAFIGLCLLSIFS) threads the bilayer. Residues Asn-210 and Asn-367 are each glycosylated (N-linked (GlcNAc...) asparagine). Residue Cys-478 coordinates heme. A glycan (N-linked (GlcNAc...) asparagine) is linked at Asn-517.

The protein belongs to the cytochrome P450 family. Heme serves as cofactor.

The protein localises to the membrane. The protein operates within secondary metabolite biosynthesis. Its function is as follows. Cytochrome P450 monooxygenase; part of the gene cluster that mediates the biosynthesis of a tyrosine-derived cytochalasan acting as a fungal signal recognized by resistant rice plants and leads to avirulence in Pi33 resistant rice cultivars. The first step in the pathway is catalyzed by the hybrid PKS-NRPS ACE1, assisted by the enoyl reductase RAP1, that are responsible for fusion of the tyrosine precursor and the polyketide backbone. The polyketide synthase module (PKS) of ACE1 is responsible for the synthesis of the polyketide backbone and the downstream nonribosomal peptide synthetase (NRPS) amidates the carboxyl end of the polyketide with the tyrosine precursor. Because ACE1 lacks a designated enoylreductase (ER) domain, the required activity is provided the enoyl reductase RAP1. Reduction by the hydrolyase ORFZ, followed by dehydration and intra-molecular Diels-Alder cyclization by the Diels-Alderase ORF3 then yield the required isoindolone-fused macrocycle. A number of oxidative steps catalyzed by the tailoring enzymes identified within the cluster, including cytochrome P450 monooxygenases CYP1 to CYP4, the FAD-linked oxidoreductase OXR2 and the short-chain dehydrogenase/reductase OXR1, are further required to afford the final cytochalasans that confer avirulence and which have still to be identified. The monooxygenase CYP1 has been shown to be a site-selective C-18 hydroxylase whereas the function of CYP3 is the site-selective epoxidation of the C-6/C-7 olefin that is present in some intermediate compounds. Finally, SYN2 and RAP2 are not required for avirulence in Pi33 resistant rice cultivars. The sequence is that of Cytochrome P450 monooxygenase CYP1 from Pyricularia oryzae (strain 70-15 / ATCC MYA-4617 / FGSC 8958) (Rice blast fungus).